A 464-amino-acid polypeptide reads, in one-letter code: Centrosomal protein of 55 kDa (464 aa).

Residues M1–K11 show a composition bias toward basic and acidic residues. A disordered region spans residues M1–T26. Coiled-coil stretches lie at residues K22–V186, N238–T337, and Q374–F403. S96 carries the phosphoserine modification. Positions P157 to C236 are interaction with TSG101. The tract at residues F160 to H214 is interaction with PDCD6IP. The segment at Q355 to K464 is required for localization to the interphase centrosome and to the midbody during cytokinesis. 2 positions are modified to phosphoserine; by CDK1 and MAPK1: S425 and S428. At T430 the chain carries Phosphothreonine. S436 bears the Phosphoserine; by PLK1 mark.

As to quaternary structure, homodimer. Interacts (phosphorylated on Ser-425 and Ser-428) with PLK1; the interaction is indirect via the MTMR3:MTMR4 heterooligomer, occurs during early mitosis, regulates the phosphorylation of CEP55 by PLK1 and its recruitment to the midbody where it can mediate cell abscission. Interacts with AKAP9/CG-NAP; the interaction occurs in interphase and is lost upon mitotic entry. Interacts with PCNT/Kendrin; the interaction occurs in interphase and is lost upon mitotic entry. Directly interacts with PDCD6IP; this interaction is required for PDCD6IP targeting to the midbody; CEP55 binds PDCD6IP in a 2:1 stoichiometry; PDCD6IP competes with TSG101 for the same binding site. Interacts with TSG101; TSG101 competes with PDCD6IP for the same binding site; interaction is required for cytokinesis but not for viral budding. Interacts with MVB12A, VPS37B, VPS37C and VPS28. In terms of processing, there is a hierachy of phosphorylation, where both Ser-425 and Ser-428 are phosphorylated at the onset of mitosis, prior to Ser-436. Phosphorylation at Ser-425 and Ser-428 is required for dissociation from the centrosome at the G2/M boundary. Phosphorylation at the 3 sites, Ser-425, Ser-428 and Ser-436, is required for protein function at the final stages of cell division to complete cytokinesis successfully. In terms of tissue distribution, expressed in embryonic brain. Expressed in fetal brain ganglionic eminence, kidney tubules and multinucleate neurons in the temporal cortex. Expressed in adult brain, cerebellum, kidney tubules, intestine and muscles (at protein level). Widely expressed, mostly in proliferative tissues. Highly expressed in testis. Intermediate levels in adult and fetal thymus, as well as in various cancer cell lines. Low levels in different parts of the digestive tract, bone marrow, lymph nodes, placenta, fetal heart and fetal spleen. Hardly detected in brain.

It localises to the cytoplasm. The protein resides in the cytoskeleton. It is found in the microtubule organizing center. The protein localises to the centrosome. Its subcellular location is the centriole. It localises to the cleavage furrow. The protein resides in the midbody. It is found in the midbody ring. Plays a role in mitotic exit and cytokinesis. Recruits PDCD6IP and TSG101 to midbody during cytokinesis. Required for successful completion of cytokinesis. Not required for microtubule nucleation. Plays a role in the development of the brain and kidney. The sequence is that of Centrosomal protein of 55 kDa from Homo sapiens (Human).